The chain runs to 61 residues: Putative MSV199 domain-containing protein 200R (61 aa).

The chain is Putative MSV199 domain-containing protein 200R from Invertebrate iridescent virus 6 (IIV-6).